The chain runs to 564 residues: Proline--tRNA ligase (564 aa).

The protein belongs to the class-II aminoacyl-tRNA synthetase family. ProS type 1 subfamily. As to quaternary structure, homodimer.

The protein resides in the cytoplasm. It carries out the reaction tRNA(Pro) + L-proline + ATP = L-prolyl-tRNA(Pro) + AMP + diphosphate. In terms of biological role, catalyzes the attachment of proline to tRNA(Pro) in a two-step reaction: proline is first activated by ATP to form Pro-AMP and then transferred to the acceptor end of tRNA(Pro). As ProRS can inadvertently accommodate and process non-cognate amino acids such as alanine and cysteine, to avoid such errors it has two additional distinct editing activities against alanine. One activity is designated as 'pretransfer' editing and involves the tRNA(Pro)-independent hydrolysis of activated Ala-AMP. The other activity is designated 'posttransfer' editing and involves deacylation of mischarged Ala-tRNA(Pro). The misacylated Cys-tRNA(Pro) is not edited by ProRS. This chain is Proline--tRNA ligase, found in Bacillus velezensis (strain DSM 23117 / BGSC 10A6 / LMG 26770 / FZB42) (Bacillus amyloliquefaciens subsp. plantarum).